Here is a 337-residue protein sequence, read N- to C-terminus: GTPase Obg (337 aa).

The region spanning 4-162 (SNFVDYAKIH…RQIVFQLKLL (159 aa)) is the Obg domain. An OBG-type G domain is found at 163-329 (ADVGLVGFPN…LKDLLWEKLR (167 aa)). Residues 169–176 (GFPNTGKS), 194–198 (FTTLE), 216–219 (DIPG), 283–286 (SKSD), and 310–312 (SSF) contribute to the GTP site. Mg(2+) contacts are provided by Ser176 and Thr196.

It belongs to the TRAFAC class OBG-HflX-like GTPase superfamily. OBG GTPase family. As to quaternary structure, monomer. It depends on Mg(2+) as a cofactor.

It is found in the cytoplasm. In terms of biological role, an essential GTPase which binds GTP, GDP and possibly (p)ppGpp with moderate affinity, with high nucleotide exchange rates and a fairly low GTP hydrolysis rate. Plays a role in control of the cell cycle, stress response, ribosome biogenesis and in those bacteria that undergo differentiation, in morphogenesis control. The sequence is that of GTPase Obg from Azobacteroides pseudotrichonymphae genomovar. CFP2.